Here is a 227-residue protein sequence, read N- to C-terminus: MKKSVNLLSGGTDSATVLAIASEMCYEIYAMSFNYGQRNNAELRKVKELIKKYNVKQHKIVDIDLRAFGGSALTDDNIDVPYYHGINALPEIVPVTYVPARNTIFLSYAVGFAEVIGSQDIFIGVHTSDSANYPDCCPEYIQSFEKMVNLATNMGVQGKKITIHAPLIDMTKEQIIRTGLKLGVDYKNTISCYSPTEDDLSCGNCLACIIRLDAFKKNNIQDPIKYV.

Leucine 8–leucine 18 is a binding site for ATP. Zn(2+)-binding residues include cysteine 192, cysteine 202, cysteine 205, and cysteine 208.

It belongs to the QueC family. Requires Zn(2+) as cofactor.

It carries out the reaction 7-carboxy-7-deazaguanine + NH4(+) + ATP = 7-cyano-7-deazaguanine + ADP + phosphate + H2O + H(+). It functions in the pathway purine metabolism; 7-cyano-7-deazaguanine biosynthesis. In terms of biological role, catalyzes the ATP-dependent conversion of 7-carboxy-7-deazaguanine (CDG) to 7-cyano-7-deazaguanine (preQ(0)). The protein is 7-cyano-7-deazaguanine synthase of Rickettsia prowazekii (strain Madrid E).